Here is a 112-residue protein sequence, read N- to C-terminus: MTVKDFDSPSNRLPTKLNEGKQKKVNYYFPPSVFQNTLQQFTFYRFSSLTYMTAEKEGRYFPMDQVFIEEVVKQIGNLGFPALIAMYLLTRFEKKFDQLIELMTELKDHAKK.

This is an uncharacterized protein from Bacillus subtilis (strain 168).